The chain runs to 271 residues: Formamidopyrimidine-DNA glycosylase (271 aa).

The active-site Schiff-base intermediate with DNA is Pro2. Catalysis depends on Glu3, which acts as the Proton donor. The active-site Proton donor; for beta-elimination activity is Lys57. The DNA site is built by His90, Arg109, and Lys151. The FPG-type zinc-finger motif lies at His236–Thr270. Catalysis depends on Arg260, which acts as the Proton donor; for delta-elimination activity.

Belongs to the FPG family. Monomer. It depends on Zn(2+) as a cofactor.

The catalysed reaction is Hydrolysis of DNA containing ring-opened 7-methylguanine residues, releasing 2,6-diamino-4-hydroxy-5-(N-methyl)formamidopyrimidine.. The enzyme catalyses 2'-deoxyribonucleotide-(2'-deoxyribose 5'-phosphate)-2'-deoxyribonucleotide-DNA = a 3'-end 2'-deoxyribonucleotide-(2,3-dehydro-2,3-deoxyribose 5'-phosphate)-DNA + a 5'-end 5'-phospho-2'-deoxyribonucleoside-DNA + H(+). Its function is as follows. Involved in base excision repair of DNA damaged by oxidation or by mutagenic agents. Acts as a DNA glycosylase that recognizes and removes damaged bases. Has a preference for oxidized purines, such as 7,8-dihydro-8-oxoguanine (8-oxoG). Has AP (apurinic/apyrimidinic) lyase activity and introduces nicks in the DNA strand. Cleaves the DNA backbone by beta-delta elimination to generate a single-strand break at the site of the removed base with both 3'- and 5'-phosphates. The chain is Formamidopyrimidine-DNA glycosylase from Shewanella sp. (strain W3-18-1).